The primary structure comprises 457 residues: tRNA-2-methylthio-N(6)-dimethylallyladenosine synthase (457 aa).

Residues 3 to 120 (KKVYIKTFGC…LPQMIDQRRA (118 aa)) enclose the MTTase N-terminal domain. [4Fe-4S] cluster contacts are provided by C12, C49, C83, C157, C161, and C164. Positions 143-377 (RVEGPSAFVS…QATIEENVAR (235 aa)) constitute a Radical SAM core domain. In terms of domain architecture, TRAM spans 380–447 (RSMVGKVERI…PHSLRGELLL (68 aa)).

This sequence belongs to the methylthiotransferase family. MiaB subfamily. As to quaternary structure, monomer. The cofactor is [4Fe-4S] cluster.

It is found in the cytoplasm. It catalyses the reaction N(6)-dimethylallyladenosine(37) in tRNA + (sulfur carrier)-SH + AH2 + 2 S-adenosyl-L-methionine = 2-methylsulfanyl-N(6)-dimethylallyladenosine(37) in tRNA + (sulfur carrier)-H + 5'-deoxyadenosine + L-methionine + A + S-adenosyl-L-homocysteine + 2 H(+). Functionally, catalyzes the methylthiolation of N6-(dimethylallyl)adenosine (i(6)A), leading to the formation of 2-methylthio-N6-(dimethylallyl)adenosine (ms(2)i(6)A) at position 37 in tRNAs that read codons beginning with uridine. This chain is tRNA-2-methylthio-N(6)-dimethylallyladenosine synthase, found in Burkholderia ambifaria (strain MC40-6).